The following is a 572-amino-acid chain: Moesin/ezrin/radixin homolog 1 (572 aa).

The 291-residue stretch at 1-291 (MNVRVTTMDA…GNHELYMRRR (291 aa)) folds into the FERM domain. The segment at 456–491 (TTTPSHHHVEEEEEMDNEEELVNGENGNQDFSKDFD) is disordered. Residues 466–477 (EEEEMDNEEELV) show a composition bias toward acidic residues. A Phosphothreonine modification is found at Thr-553.

Interacts with cytoskeletal actin.

Its subcellular location is the cell junction. The protein resides in the adherens junction. It localises to the cell projection. It is found in the microvillus. The protein localises to the rhabdomere. Its subcellular location is the cell membrane. The protein resides in the cytoplasm. It localises to the cytoskeleton. Involved in connections of major cytoskeletal structures to the plasma membrane. This chain is Moesin/ezrin/radixin homolog 1, found in Culex quinquefasciatus (Southern house mosquito).